We begin with the raw amino-acid sequence, 504 residues long: Beta-xylosidase (504 aa).

The active-site Proton donor is the E160. The Nucleophile role is filled by E280.

It belongs to the glycosyl hydrolase 39 family.

The catalysed reaction is Hydrolysis of (1-&gt;4)-beta-D-xylans, to remove successive D-xylose residues from the non-reducing termini.. The sequence is that of Beta-xylosidase (xynB) from Geobacillus stearothermophilus (Bacillus stearothermophilus).